A 310-amino-acid chain; its full sequence is p-hydroxybenzoic acid efflux pump subunit AaeA (310 aa).

A helical transmembrane segment spans residues 12–32 (AITVVLVILAFIAIFNAWVYY).

The protein belongs to the membrane fusion protein (MFP) (TC 8.A.1) family.

It localises to the cell inner membrane. Its function is as follows. Forms an efflux pump with AaeB. The protein is p-hydroxybenzoic acid efflux pump subunit AaeA of Escherichia coli O17:K52:H18 (strain UMN026 / ExPEC).